The following is a 126-amino-acid chain: uncharacterized protein (126 aa).

Thr68 bears the Phosphothreonine mark.

This is an uncharacterized protein from Pseudomonas aeruginosa (strain UCBPP-PA14).